The primary structure comprises 125 residues: Prefoldin subunit beta (125 aa).

The protein belongs to the prefoldin subunit beta family. As to quaternary structure, heterohexamer of two alpha and four beta subunits.

Its subcellular location is the cytoplasm. Its function is as follows. Molecular chaperone capable of stabilizing a range of proteins. Seems to fulfill an ATP-independent, HSP70-like function in archaeal de novo protein folding. The protein is Prefoldin subunit beta of Pyrobaculum calidifontis (strain DSM 21063 / JCM 11548 / VA1).